The primary structure comprises 543 residues: MTRYIFVTGGVVSSLGKGIASASLAAILEARGLKVTMLKLDPYINVDPGTMSPFQHGEVFVTHDGAETDLDLGHYERFIRTTMTQNNNFTTGRVYEHVLRKERRGDYLGATIQVIPHITDEIKRRIIKGAGDADVALVEIGGTVGDIESQPFLEAIRQLRFEVGARRAMLMHLTLVPYIATAGETKTKPTQHSVKELRSIGLQPDVLVCRSDHPIDVSSRRKIAQFTNVEERAVIALEDADTIYKIPGILHSQGLDDFVVERFGLQCEGADLSEWDKVVDAKLNPEHEVTIAMVGKYMELLDAYKSLIEAMSHAGITNRTKVNLRYIDSEDIENQGTGLLEGVDAILVPGGFGLRGVEGKITAVQFARENKVPYLGICLGMQVAVIEFARNVLGWKDANSTEFNRTSAHAVVGLITEWEDATGAVETRTESSDLGGTMRLGAQDCQLEAGSLVHDCYRKDVIVERHRHRYEVNNNLLPQLIEAGLKISGRSGDGALVEVVEAPDHPWFVACQFHPEFTSTPRDGHPLFSGFVKAALAQHQKNS.

The amidoligase domain stretch occupies residues 1–265; that stretch reads MTRYIFVTGG…DDFVVERFGL (265 aa). Ser-13 contributes to the CTP binding site. Ser-13 serves as a coordination point for UTP. ATP-binding positions include 14-19 and Asp-71; that span reads SLGKGI. Asp-71 and Glu-139 together coordinate Mg(2+). Residues 146 to 148, 186 to 191, and Lys-222 contribute to the CTP site; these read DIE and KTKPTQ. UTP-binding positions include 186–191 and Lys-222; that span reads KTKPTQ. The Glutamine amidotransferase type-1 domain maps to 290–541; sequence TIAMVGKYME…VKAALAQHQK (252 aa). Gly-351 is a binding site for L-glutamine. The Nucleophile; for glutamine hydrolysis role is filled by Cys-378. L-glutamine contacts are provided by residues 379-382, Glu-402, and Arg-469; that span reads LGMQ. Residues His-514 and Glu-516 contribute to the active site.

This sequence belongs to the CTP synthase family. In terms of assembly, homotetramer.

It carries out the reaction UTP + L-glutamine + ATP + H2O = CTP + L-glutamate + ADP + phosphate + 2 H(+). The enzyme catalyses L-glutamine + H2O = L-glutamate + NH4(+). The catalysed reaction is UTP + NH4(+) + ATP = CTP + ADP + phosphate + 2 H(+). Its pathway is pyrimidine metabolism; CTP biosynthesis via de novo pathway; CTP from UDP: step 2/2. With respect to regulation, allosterically activated by GTP, when glutamine is the substrate; GTP has no effect on the reaction when ammonia is the substrate. The allosteric effector GTP functions by stabilizing the protein conformation that binds the tetrahedral intermediate(s) formed during glutamine hydrolysis. Inhibited by the product CTP, via allosteric rather than competitive inhibition. Functionally, catalyzes the ATP-dependent amination of UTP to CTP with either L-glutamine or ammonia as the source of nitrogen. Regulates intracellular CTP levels through interactions with the four ribonucleotide triphosphates. This is CTP synthase from Pseudomonas savastanoi pv. phaseolicola (strain 1448A / Race 6) (Pseudomonas syringae pv. phaseolicola (strain 1448A / Race 6)).